Consider the following 361-residue polypeptide: Caffeic acid 3-O-methyltransferase 1 (361 aa).

128–134 (MNQDKVL) is a binding site for substrate. Residues 160–178 (AFEYHGTDPRFNKVFNQGM) are substrate binding. Residues glycine 206, aspartate 229, aspartate 249, methionine 250, and lysine 263 each coordinate S-adenosyl-L-methionine. Histidine 267 functions as the Proton acceptor in the catalytic mechanism.

This sequence belongs to the class I-like SAM-binding methyltransferase superfamily. Cation-independent O-methyltransferase family. COMT subfamily. As to quaternary structure, homodimer.

It carries out the reaction (E)-caffeate + S-adenosyl-L-methionine = (E)-ferulate + S-adenosyl-L-homocysteine + H(+). It participates in aromatic compound metabolism; phenylpropanoid biosynthesis. Functionally, catalyzes the conversion of caffeic acid to ferulic acid and of 5-hydroxyferulic acid to sinapic acid. The resulting products may subsequently be converted to the corresponding alcohols that are incorporated into lignins. This chain is Caffeic acid 3-O-methyltransferase 1 (COMT1), found in Ocimum basilicum (Sweet basil).